The sequence spans 428 residues: Phosphomethylpyrimidine synthase 2 (428 aa).

Substrate contacts are provided by residues methionine 94, tyrosine 123, histidine 162, 184–186, 225–228, and glutamate 264; these read SRG and NGMR. Zn(2+) is bound at residue histidine 268. Tyrosine 291 serves as a coordination point for substrate. Histidine 332 provides a ligand contact to Zn(2+). [4Fe-4S] cluster contacts are provided by cysteine 408, cysteine 411, and cysteine 415.

It belongs to the ThiC family. [4Fe-4S] cluster is required as a cofactor.

It catalyses the reaction 5-amino-1-(5-phospho-beta-D-ribosyl)imidazole + S-adenosyl-L-methionine = 4-amino-2-methyl-5-(phosphooxymethyl)pyrimidine + CO + 5'-deoxyadenosine + formate + L-methionine + 3 H(+). It functions in the pathway cofactor biosynthesis; thiamine diphosphate biosynthesis. Its function is as follows. Catalyzes the synthesis of the hydroxymethylpyrimidine phosphate (HMP-P) moiety of thiamine from aminoimidazole ribotide (AIR) in a radical S-adenosyl-L-methionine (SAM)-dependent reaction. The chain is Phosphomethylpyrimidine synthase 2 from Methanosarcina acetivorans (strain ATCC 35395 / DSM 2834 / JCM 12185 / C2A).